The sequence spans 407 residues: Putative cell wall shaping protein YabE (407 aa).

Positions 1-31 (MKKLFSVKLSKSKVILVAACLLLAGSGTAYA) are cleaved as a signal peptide. The G5 domain maps to 206-286 (ITRIEKVTDV…DKVIAVGTKQ (81 aa)).

Suggested to be involved in cell wall modification. This Bacillus subtilis (strain 168) protein is Putative cell wall shaping protein YabE (yabE).